We begin with the raw amino-acid sequence, 369 residues long: Tetraacyldisaccharide 4'-kinase (369 aa).

Residue 68–75 (VVGGTGKT) participates in ATP binding.

This sequence belongs to the LpxK family.

The enzyme catalyses a lipid A disaccharide + ATP = a lipid IVA + ADP + H(+). It participates in glycolipid biosynthesis; lipid IV(A) biosynthesis; lipid IV(A) from (3R)-3-hydroxytetradecanoyl-[acyl-carrier-protein] and UDP-N-acetyl-alpha-D-glucosamine: step 6/6. Its function is as follows. Transfers the gamma-phosphate of ATP to the 4'-position of a tetraacyldisaccharide 1-phosphate intermediate (termed DS-1-P) to form tetraacyldisaccharide 1,4'-bis-phosphate (lipid IVA). The chain is Tetraacyldisaccharide 4'-kinase from Chlamydia muridarum (strain MoPn / Nigg).